Consider the following 246-residue polypeptide: NADH-quinone oxidoreductase subunit C (246 aa).

Belongs to the complex I 30 kDa subunit family. In terms of assembly, NDH-1 is composed of 14 different subunits. Subunits NuoB, C, D, E, F, and G constitute the peripheral sector of the complex.

It is found in the cell inner membrane. It catalyses the reaction a quinone + NADH + 5 H(+)(in) = a quinol + NAD(+) + 4 H(+)(out). Its function is as follows. NDH-1 shuttles electrons from NADH, via FMN and iron-sulfur (Fe-S) centers, to quinones in the respiratory chain. The immediate electron acceptor for the enzyme in this species is believed to be ubiquinone. Couples the redox reaction to proton translocation (for every two electrons transferred, four hydrogen ions are translocated across the cytoplasmic membrane), and thus conserves the redox energy in a proton gradient. The sequence is that of NADH-quinone oxidoreductase subunit C from Halorhodospira halophila (strain DSM 244 / SL1) (Ectothiorhodospira halophila (strain DSM 244 / SL1)).